A 304-amino-acid chain; its full sequence is Meiotically up-regulated gene 86 protein (304 aa).

Residues 1–12 (MSSNPSRSNSRS) are compositionally biased toward low complexity. The segment at 1-23 (MSSNPSRSNSRSKNGDLESGLKF) is disordered. 6 helical membrane-spanning segments follow: residues 93–113 (PAPFGLSAFAFTTFLLSLFNV), 123–143 (MVTAPAAFYGGLAQLLASMWE), 150–170 (FGGAVFGSYGCFWLSYASIFI), 188–208 (AIGLYLICWFIFTFLVLLCTV), 212–232 (LAFFSLFMSLDVCFLLLACAF), and 247–267 (VGGAFGIFSACAAWYNAMAGL).

This sequence belongs to the acetate uptake transporter (AceTr) (TC 2.A.96) family.

It localises to the endoplasmic reticulum membrane. The protein localises to the golgi apparatus. It is found in the golgi stack membrane. Its subcellular location is the vacuole membrane. Has a role in meiosis. The chain is Meiotically up-regulated gene 86 protein (mug86) from Schizosaccharomyces pombe (strain 972 / ATCC 24843) (Fission yeast).